The sequence spans 761 residues: Phosphoribosylformylglycinamidine synthase subunit PurL (761 aa).

His58 is a catalytic residue. The ATP site is built by Tyr61 and Lys105. Glu107 lines the Mg(2+) pocket. Residues 108–111 (SHNH) and Arg130 contribute to the substrate site. The active-site Proton acceptor is His109. Residue Asp131 participates in Mg(2+) binding. Gln259 lines the substrate pocket. Residue Asp287 participates in Mg(2+) binding. 331–333 (ESQ) lines the substrate pocket. The ATP site is built by Asn519 and Gly556. Asn557 is a Mg(2+) binding site. Ser559 serves as a coordination point for substrate.

It belongs to the FGAMS family. As to quaternary structure, monomer. Part of the FGAM synthase complex composed of 1 PurL, 1 PurQ and 2 PurS subunits.

Its subcellular location is the cytoplasm. It carries out the reaction N(2)-formyl-N(1)-(5-phospho-beta-D-ribosyl)glycinamide + L-glutamine + ATP + H2O = 2-formamido-N(1)-(5-O-phospho-beta-D-ribosyl)acetamidine + L-glutamate + ADP + phosphate + H(+). Its pathway is purine metabolism; IMP biosynthesis via de novo pathway; 5-amino-1-(5-phospho-D-ribosyl)imidazole from N(2)-formyl-N(1)-(5-phospho-D-ribosyl)glycinamide: step 1/2. Its function is as follows. Part of the phosphoribosylformylglycinamidine synthase complex involved in the purines biosynthetic pathway. Catalyzes the ATP-dependent conversion of formylglycinamide ribonucleotide (FGAR) and glutamine to yield formylglycinamidine ribonucleotide (FGAM) and glutamate. The FGAM synthase complex is composed of three subunits. PurQ produces an ammonia molecule by converting glutamine to glutamate. PurL transfers the ammonia molecule to FGAR to form FGAM in an ATP-dependent manner. PurS interacts with PurQ and PurL and is thought to assist in the transfer of the ammonia molecule from PurQ to PurL. The chain is Phosphoribosylformylglycinamidine synthase subunit PurL from Rhodococcus opacus (strain B4).